The chain runs to 210 residues: Glutathione S-transferase P (210 aa).

Residues 2–81 (PPYTIVYFPV…HLGRSLGLYG (80 aa)) enclose the GST N-terminal domain. A Phosphotyrosine; by EGFR modification is found at Y4. Glutathione-binding positions include Y8, R14, W39, K45, and 52 to 53 (QL). The residue at position 62 (T62) is a Phosphothreonine. 65–66 (QS) contacts glutathione. The region spanning 83 to 204 (DQREAALVDM…SSPDHVNRPI (122 aa)) is the GST C-terminal domain. 2 positions are modified to N6-succinyllysine: K103 and K116. Position 128 is an N6-acetyllysine (K128).

The protein belongs to the GST superfamily. Pi family. Homodimer. Interacts with CDK5.

Its subcellular location is the cytoplasm. The protein resides in the mitochondrion. It localises to the nucleus. It carries out the reaction RX + glutathione = an S-substituted glutathione + a halide anion + H(+). It catalyses the reaction prostaglandin J2 + glutathione = prostaglandin J2-S-(R)-glutathione. The catalysed reaction is prostaglandin J2 + glutathione = prostaglandin J2-S-(S)-glutathione. The enzyme catalyses prostaglandin A2 + glutathione = prostaglandin A2-S-(S)-glutathione. It carries out the reaction 11(S)-hydroxy-14(S),15(S)-epoxy-(5Z,8Z,12E)-eicosatrienoate + glutathione = (11S,15S)-dihydroxy-14(R)-S-glutathionyl-(5Z,8Z,12E)-eicosatrienoate. Conjugation of reduced glutathione to a wide number of exogenous and endogenous hydrophobic electrophiles. Involved in the formation of glutathione conjugates of both prostaglandin A2 (PGA2) and prostaglandin J2 (PGJ2). Participates in the formation of novel hepoxilin regioisomers. Negatively regulates CDK5 activity via p25/p35 translocation to prevent neurodegeneration. The sequence is that of Glutathione S-transferase P (GSTP1) from Cricetulus longicaudatus (Long-tailed dwarf hamster).